We begin with the raw amino-acid sequence, 146 residues long: UPF0178 protein OB0454 (146 aa).

Belongs to the UPF0178 family.

The protein is UPF0178 protein OB0454 of Oceanobacillus iheyensis (strain DSM 14371 / CIP 107618 / JCM 11309 / KCTC 3954 / HTE831).